Consider the following 134-residue polypeptide: Natriuretic peptides B (134 aa).

An N-terminal signal peptide occupies residues 1–26; that stretch reads MDPQTAPSRALLLLLFLHLAFLGGRS. The O-linked (Xyl...) (chondroitin sulfate) serine glycan is linked to S41. An O-linked (HexNAc...) threonine; Partial glycan is attached at T62. O-linked (HexNAc...) serine glycans are attached at residues S63 and S70. An O-linked (HexNAc...) threonine glycan is attached at T74. The O-linked (HexNAc...) serine glycan is linked to S79. A glycan (O-linked (HexNAc...) threonine; Partial) is linked at T84. The O-linked (HexNAc...) threonine glycan is linked to T97. C112 and C128 are disulfide-bonded.

This sequence belongs to the natriuretic peptide family. Post-translationally, the precursor molecule is proteolytically cleaved by the endoproteases FURIN or CORIN at Arg-102 to produce brain natriuretic peptide 32 and NT-proBNP. This likely occurs after it has been secreted into the blood, either during circulation or in the target cells. CORIN also cleaves the precursor molecule at additional residues including Arg-99 and possibly Lys-105. In patients with heart failure, processing and degradation of natriuretic peptides B occurs but is delayed, possibly due to a decrease in enzyme level or activity of CORIN and DPP4. Undergoes further proteolytic cleavage by various proteases such as DPP4, MME and possibly FAP, to give rise to a variety of shorter peptides. Cleaved at Pro-104 by the prolyl endopeptidase FAP (seprase) activity (in vitro). Degraded by IDE. During IDE degradation, the resulting products initially increase the activation of NPR1 and can also stimulate NPR2 to produce cGMP before the fragments are completely degraded and inactivated by IDE (in vitro). In terms of processing, O-glycosylated on at least seven residues. In cardiomyocytes, glycosylation at Thr-97 is essential for the stability and processing of the extracellular natriuretic peptides B. Glycosylation, especially at Thr-97, may also be important for brain natriuretic peptide 32 stability and/or extracellular distribution. Glycosylation at Thr-97 appears to inhibit FURIN- or CORIN-mediated proteolytic processing, at least in HEK293 cells. Detected in the cardiac atria (at protein level). Detected in the kidney distal tubular cells (at protein level).

It is found in the secreted. Its function is as follows. Cardiac hormone that plays a key role in mediating cardio-renal homeostasis. May also function as a paracrine antifibrotic factor in the heart. Acts by specifically binding and stimulating NPR1 to produce cGMP, which in turn activates effector proteins that drive various biological responses. Involved in regulating the extracellular fluid volume and maintaining the fluid-electrolyte balance through natriuresis, diuresis, vasorelaxation, and inhibition of renin and aldosterone secretion. Binds the clearance receptor NPR3. Functionally, may affect cardio-renal homeostasis. Able to promote the production of cGMP although its potency is very low compared to brain natriuretic peptide 32. In terms of biological role, may have a role in cardio-renal homeostasis. Able to promote the production of cGMP. The sequence is that of Natriuretic peptides B (NPPB) from Homo sapiens (Human).